The chain runs to 148 residues: UPF0756 membrane protein KPN78578_11500 (148 aa).

Transmembrane regions (helical) follow at residues 14 to 34 (ALGF…LIIV), 51 to 71 (LTVG…SGTL), 86 to 106 (LLAI…VSLM), and 121 to 141 (VLGV…AGII).

Belongs to the UPF0756 family.

Its subcellular location is the cell membrane. The protein is UPF0756 membrane protein KPN78578_11500 of Klebsiella pneumoniae subsp. pneumoniae (strain ATCC 700721 / MGH 78578).